Here is an 820-residue protein sequence, read N- to C-terminus: Probable protease Ga0182885_104520 (820 aa).

The protein belongs to the peptidase C25 family.

Probably a dedicated protease for substrate gasdermin bGSDM; cleaves the bGSDM precursor, releasing the pore-forming moiety, which integrates into the membrane and triggers cell death. Involved in defense against bacteriophages. Expression of bacterial gasdermin (bGSDM) and this neighboring protease is toxic in E.coli. This is Probable protease Ga0182885_104520 from Desulfuromonadales bacterium.